A 375-amino-acid polypeptide reads, in one-letter code: Chaperone protein DnaJ (375 aa).

One can recognise a J domain in the interval 5–70; the sequence is DYYEVLGVER…GKRMAYDQYG (66 aa). The CR-type zinc finger occupies 134–212; it reads GTTVTIRVPT…CHGQGRVEEH (79 aa). Residues cysteine 147, cysteine 150, cysteine 164, cysteine 167, cysteine 186, cysteine 189, cysteine 200, and cysteine 203 each coordinate Zn(2+). CXXCXGXG motif repeat units lie at residues 147 to 154, 164 to 171, 186 to 193, and 200 to 207; these read CKTCDGSG, CTTCGGIG, CPRCHGSG, and CPDCHGQG.

It belongs to the DnaJ family. In terms of assembly, homodimer. The cofactor is Zn(2+).

The protein localises to the cytoplasm. Its function is as follows. Participates actively in the response to hyperosmotic and heat shock by preventing the aggregation of stress-denatured proteins and by disaggregating proteins, also in an autonomous, DnaK-independent fashion. Unfolded proteins bind initially to DnaJ; upon interaction with the DnaJ-bound protein, DnaK hydrolyzes its bound ATP, resulting in the formation of a stable complex. GrpE releases ADP from DnaK; ATP binding to DnaK triggers the release of the substrate protein, thus completing the reaction cycle. Several rounds of ATP-dependent interactions between DnaJ, DnaK and GrpE are required for fully efficient folding. Also involved, together with DnaK and GrpE, in the DNA replication of plasmids through activation of initiation proteins. This chain is Chaperone protein DnaJ, found in Azotobacter vinelandii (strain DJ / ATCC BAA-1303).